The primary structure comprises 303 residues: Agmatinase (303 aa).

Mn(2+)-binding residues include His-126, Asp-149, His-151, Asp-153, Asp-230, and Asp-232.

This sequence belongs to the arginase family. Agmatinase subfamily. Mn(2+) serves as cofactor.

It catalyses the reaction agmatine + H2O = urea + putrescine. Its function is as follows. Catalyzes the formation of putrescine from agmatine. The protein is Agmatinase (speB) of Blochmanniella floridana.